The primary structure comprises 201 residues: Elongation factor Ts (201 aa).

Positions 81 to 84 (TDFV) are involved in Mg(2+) ion dislocation from EF-Tu.

Belongs to the EF-Ts family.

It localises to the cytoplasm. Its function is as follows. Associates with the EF-Tu.GDP complex and induces the exchange of GDP to GTP. It remains bound to the aminoacyl-tRNA.EF-Tu.GTP complex up to the GTP hydrolysis stage on the ribosome. This is Elongation factor Ts from Syntrophus aciditrophicus (strain SB).